The following is a 488-amino-acid chain: Mannosylglycerate hydrolase MGH2 (488 aa).

Residues Tyr94, 98-101 (WNWD), Tyr146, Gln167, and Gly227 contribute to the substrate site. Catalysis depends on Asp229, which acts as the Proton donor. Residues Arg262 and 415 to 416 (YW) contribute to the substrate site. Glu459 serves as the catalytic Proton acceptor.

It belongs to the glycosyl hydrolase 63 family.

The catalysed reaction is (2R)-2-O-(alpha-D-mannosyl)-glycerate + H2O = D-mannose + (R)-glycerate. It carries out the reaction (2R)-2-O-(alpha-D-glucopyranosyl)-glycerate + H2O = (R)-glycerate + D-glucose. Its activity is regulated as follows. Activity is not dependent on divalent cations, but it is enhanced by Mn(2+). Its function is as follows. Catalyzes the hydrolysis of alpha-D-mannosyl-glycerate (MG) to D-glycerate and D-mannose. Can also hydrolyze alpha-D-glucopyranosyl-glycerate (GG)with lower efficiency. This chain is Mannosylglycerate hydrolase MGH2, found in Selaginella moellendorffii (Spikemoss).